The following is a 1068-amino-acid chain: Phosphatidylinositol 4,5-bisphosphate 3-kinase catalytic subunit alpha isoform (1068 aa).

The region spanning 16-105 is the PI3K-ABD domain; sequence MPPRILVECL…QPFLKVIEPV (90 aa). One can recognise a PI3K-RBD domain in the interval 187 to 289; it reads KGQIIVVIWV…GRMPNLMLMA (103 aa). A C2 PI3K-type domain is found at 330–487; the sequence is INSALRIKIL…DWFSSVVKFP (158 aa). The 178-residue stretch at 517 to 694 folds into the PIK helical domain; it reads LARDNELREN…GLLLESYCRA (178 aa). The PI3K/PI4K catalytic domain occupies 765–1051; the sequence is RLEECRIMSS…QMNDAHHGGW (287 aa). Residues 771–777 are G-loop; the sequence is IMSSAKR. The tract at residues 912–920 is catalytic loop; sequence GIGDRHNSN. Residues 931–957 form an activation loop region; the sequence is HIDFGHFLDHKKKKFGYKRERVPFVLT.

The protein belongs to the PI3/PI4-kinase family. Heterodimer of a catalytic subunit PIK3CA and a p85 regulatory subunit (PIK3R1, PIK3R2 or PIK3R3). Interacts with IRS1 in nuclear extracts. Interacts with RUFY3. Interacts with RASD2. Interacts with APPL1. Interacts with HRAS and KRAS. Interaction with HRAS/KRAS is required for PI3K pathway signaling and cell proliferation stimulated by EGF and FGF2. Interacts with FAM83B; activates the PI3K/AKT signaling cascade.

The enzyme catalyses a 1,2-diacyl-sn-glycero-3-phospho-(1D-myo-inositol-4,5-bisphosphate) + ATP = a 1,2-diacyl-sn-glycero-3-phospho-(1D-myo-inositol-3,4,5-trisphosphate) + ADP + H(+). It carries out the reaction a 1,2-diacyl-sn-glycero-3-phospho-(1D-myo-inositol) + ATP = a 1,2-diacyl-sn-glycero-3-phospho-(1D-myo-inositol-3-phosphate) + ADP + H(+). It catalyses the reaction L-seryl-[protein] + ATP = O-phospho-L-seryl-[protein] + ADP + H(+). The catalysed reaction is 1,2-dioctanoyl-sn-glycero-3-phospho-(1D-myo-inositol-4,5-bisphosphate) + ATP = 1,2-dioctanoyl-sn-glycero-3-phospho-(1D-myo-inositol-3,4,5-trisphosphate) + ADP + H(+). The enzyme catalyses 1-octadecanoyl-2-(5Z,8Z,11Z,14Z)-eicosatetraenoyl-sn-glycero-3-phospho-1D-myo-inositol 4,5-bisphosphate + ATP = 1-octadecanoyl-2-(5Z,8Z,11Z,14Z-eicosatetraenoyl)-sn-glycero-3-phospho-(1D-myo-inositol 3,4,5-triphosphate) + ADP + H(+). It functions in the pathway phospholipid metabolism; phosphatidylinositol phosphate biosynthesis. Functionally, phosphoinositide-3-kinase (PI3K) phosphorylates phosphatidylinositol (PI) and its phosphorylated derivatives at position 3 of the inositol ring to produce 3-phosphoinositides. Uses ATP and PtdIns(4,5)P2 (phosphatidylinositol 4,5-bisphosphate) to generate phosphatidylinositol 3,4,5-trisphosphate (PIP3). PIP3 plays a key role by recruiting PH domain-containing proteins to the membrane, including AKT1 and PDPK1, activating signaling cascades involved in cell growth, survival, proliferation, motility and morphology. Participates in cellular signaling in response to various growth factors. Involved in the activation of AKT1 upon stimulation by receptor tyrosine kinases ligands such as EGF, insulin, IGF1, VEGFA and PDGF. Involved in signaling via insulin-receptor substrate (IRS) proteins. Essential in endothelial cell migration during vascular development through VEGFA signaling, possibly by regulating RhoA activity. Required for lymphatic vasculature development, possibly by binding to RAS and by activation by EGF and FGF2, but not by PDGF. Regulates invadopodia formation through the PDPK1-AKT1 pathway. Participates in cardiomyogenesis in embryonic stem cells through a AKT1 pathway. Participates in vasculogenesis in embryonic stem cells through PDK1 and protein kinase C pathway. In addition to its lipid kinase activity, it displays a serine-protein kinase activity that results in the autophosphorylation of the p85alpha regulatory subunit as well as phosphorylation of other proteins such as 4EBP1, H-Ras, the IL-3 beta c receptor and possibly others. Plays a role in the positive regulation of phagocytosis and pinocytosis. The polypeptide is Phosphatidylinositol 4,5-bisphosphate 3-kinase catalytic subunit alpha isoform (PIK3CA) (Homo sapiens (Human)).